The chain runs to 146 residues: Angiogenin (146 aa).

The first 24 residues, 1–24 (MVMGLGLFLLVFMLGLGLTLPTLA), serve as a signal peptide directing secretion. Gln25 carries the pyrrolidone carboxylic acid modification. Catalysis depends on His37, which acts as the Proton acceptor. TRNA is bound at residue Arg45. Intrachain disulfides connect Cys50–Cys105, Cys63–Cys116, and Cys81–Cys131. The short motif at 55 to 59 (RRRHL) is the Nucleolar localization signal element. TRNA contacts are provided by Cys105 and Ile127. The active-site Proton donor is the His138.

This sequence belongs to the pancreatic ribonuclease family. As to quaternary structure, homodimer. Interacts with RNH1; inhibiting ANG ribonuclease activity. Interacts with PCNA.

The protein localises to the secreted. It is found in the nucleus. Its subcellular location is the nucleolus. The protein resides in the cytoplasm. It localises to the stress granule. With respect to regulation, has weak tRNA ribonuclease activity by itself due to partial autoinhibition by its C-terminus, which folds into a short alpha-helix that partially occludes the substrate-binding site. In absence of stress, the ribonuclease activity is inhibited by RNH1 in the cytoplasm. In response to stress, dissociates from RNH1 in the cytoplasm and associates with cytoplasmic ribosomes with vacant A-sites: ribosomes directly activate the tRNA ribonuclease activity of ANG by refolding the C-terminal alpha-helix. In response to stress, the angiogenic activity of ANG is inhibited by RNH1 in the nucleus. Functionally, secreted ribonuclease that can either promote or restrict cell proliferation of target cells, depending on the context. Endocytosed in target cells via its receptor PLXNB2 and translocates to the cytoplasm or nucleus. Under stress conditions, localizes to the cytoplasm and promotes the assembly of stress granules (SGs): specifically cleaves a subset of tRNAs within anticodon loops to produce tRNA-derived stress-induced fragments (tiRNAs), resulting in translation repression and inhibition of cell proliferation. tiRNas also prevent formation of apoptosome, thereby promoting cell survival. Preferentially cleaves RNAs between a pyrimidine and an adenosine residue, suggesting that it cleaves the anticodon loop of tRNA(Ala) (32-UUAGCAU-38) after positions 33 and 36. Cleaves a subset of tRNAs, including tRNA(Ala), tRNA(Glu), tRNA(Gly), tRNA(Lys), tRNA(Val), tRNA(His), tRNA(Asp) and tRNA(Sec). Under growth conditions and in differentiated cells, translocates to the nucleus and stimulates ribosomal RNA (rRNA) transcription, including that containing the initiation site sequences of 45S rRNA, thereby promoting cell growth and proliferation. Angiogenin induces vascularization of normal and malignant tissues via its ability to promote rRNA transcription. Involved in hematopoietic stem and progenitor cell (HSPC) growth and survival by promoting rRNA transcription in growth conditions and inhibiting translation in response to stress, respectively. Mediates the crosstalk between myeloid and intestinal epithelial cells to protect the intestinal epithelial barrier integrity: secreted by myeloid cells and promotes intestinal epithelial cells proliferation and survival. Also mediates osteoclast-endothelial cell crosstalk in growing bone: produced by osteoclasts and protects the neighboring vascular cells against senescence by promoting rRNA transcription. The chain is Angiogenin (ANG) from Papio hamadryas (Hamadryas baboon).